Reading from the N-terminus, the 226-residue chain is Uracil-DNA glycosylase (226 aa).

Residue Asp64 is the Proton acceptor of the active site.

It belongs to the uracil-DNA glycosylase (UDG) superfamily. UNG family.

It is found in the cytoplasm. It carries out the reaction Hydrolyzes single-stranded DNA or mismatched double-stranded DNA and polynucleotides, releasing free uracil.. Its function is as follows. Excises uracil residues from the DNA which can arise as a result of misincorporation of dUMP residues by DNA polymerase or due to deamination of cytosine. The protein is Uracil-DNA glycosylase of Vibrio vulnificus (strain CMCP6).